We begin with the raw amino-acid sequence, 329 residues long: RING finger protein 225 (329 aa).

Residues 1-55 (MPCPRPFWLRHSRAPQGSGPSSPGSLSAPRSPSRGEDQEEEEEEEGDGSPGSGPI) form a disordered region. The segment covering 14–32 (APQGSGPSSPGSLSAPRSP) has biased composition (low complexity). Positions 37–47 (DQEEEEEEEGD) are enriched in acidic residues. An RING-type zinc finger spans residues 64-112 (CLICVSSFDGVFKLPKRLDCGHVFCLECLARLSLATAGGGNAVACPVCR). The interval 122 to 181 (GLPALPTQSGLLPRDARAPPSRQGSVRFDRRRGLLYLRPPPPPPGPRKARAPPPPPPLRL) is disordered. The segment covering 159-179 (RPPPPPPGPRKARAPPPPPPL) has biased composition (pro residues). Residues 203–223 (ALAVLVAAGLVVSGVYIFFLI) traverse the membrane as a helical segment. Positions 248–329 (FPPRPPPGSP…RGARRLWGSQ (82 aa)) are disordered. The segment covering 281 to 293 (DALEPEAGPEDPA) has biased composition (acidic residues). Residues 294 to 304 (EAERTLDRRSD) are compositionally biased toward basic and acidic residues.

It is found in the membrane. This Homo sapiens (Human) protein is RING finger protein 225.